Here is a 341-residue protein sequence, read N- to C-terminus: UDP-N-acetyl-alpha-D-glucosaminouronate 4-epimerase (341 aa).

NAD(+) is bound by residues phenylalanine 27, isoleucine 28, aspartate 47, alanine 50, threonine 51, glycine 52, aspartate 78, isoleucine 79, and glutamine 98. UDP-N-acetyl-alpha-D-galactosamine is bound at residue serine 103. Threonine 117 is an NAD(+) binding site. Residues serine 142, serine 143, and tyrosine 166 each coordinate UDP-N-acetyl-alpha-D-galactosamine. Tyrosine 166 and lysine 170 together coordinate NAD(+). The active-site Proton acceptor is the tyrosine 166. Asparagine 195 contributes to the UDP-N-acetyl-alpha-D-galactosamine binding site. An NAD(+)-binding site is contributed by valine 196. Residues valine 210, tyrosine 225, asparagine 227, arginine 234, arginine 299, and aspartate 302 each contribute to the UDP-N-acetyl-alpha-D-galactosamine site.

This sequence belongs to the NAD(P)-dependent epimerase/dehydratase family. Homodimer. NAD(+) is required as a cofactor.

The enzyme catalyses UDP-2-acetamido-2-deoxy-alpha-D-glucuronate = UDP-2-acetamido-2-deoxy-alpha-D-galacturonate. It catalyses the reaction UDP-N-acetyl-alpha-D-glucosamine = UDP-N-acetyl-alpha-D-galactosamine. It participates in bacterial outer membrane biogenesis; LPS O-antigen biosynthesis. Epimerase required for the biosynthesis of the B-band O antigen of serotype O6 lipopolysaccharide. Catalyzes the reversible epimerization of UDP-N-acetylglucosaminuronic acid (UDP-GlcNAcA) to UDP-N-acetylgalactosaminuronic acid (UDP-GalNAcA). Also catalyzes the reversible epimerization of UDP-N-acetylglucosamine (UDP-GlcNAc) to UDP-N-acetylgalactosamine (UDP-GalNAc). Has very low epimerase activity with UDP-glucose (UDP-Glc) and UDP-galactose (UDP-Gal). The protein is UDP-N-acetyl-alpha-D-glucosaminouronate 4-epimerase of Pseudomonas aeruginosa.